A 417-amino-acid chain; its full sequence is Serine hydroxymethyltransferase (417 aa).

Residues leucine 121 and 125–127 (GHL) contribute to the (6S)-5,6,7,8-tetrahydrofolate site. Lysine 229 is subject to N6-(pyridoxal phosphate)lysine. Residue 355-357 (SPF) participates in (6S)-5,6,7,8-tetrahydrofolate binding.

This sequence belongs to the SHMT family. Homodimer. Pyridoxal 5'-phosphate is required as a cofactor.

The protein localises to the cytoplasm. The catalysed reaction is (6R)-5,10-methylene-5,6,7,8-tetrahydrofolate + glycine + H2O = (6S)-5,6,7,8-tetrahydrofolate + L-serine. It functions in the pathway one-carbon metabolism; tetrahydrofolate interconversion. It participates in amino-acid biosynthesis; glycine biosynthesis; glycine from L-serine: step 1/1. Functionally, catalyzes the reversible interconversion of serine and glycine with tetrahydrofolate (THF) serving as the one-carbon carrier. This reaction serves as the major source of one-carbon groups required for the biosynthesis of purines, thymidylate, methionine, and other important biomolecules. Also exhibits THF-independent aldolase activity toward beta-hydroxyamino acids, producing glycine and aldehydes, via a retro-aldol mechanism. The protein is Serine hydroxymethyltransferase of Photorhabdus laumondii subsp. laumondii (strain DSM 15139 / CIP 105565 / TT01) (Photorhabdus luminescens subsp. laumondii).